Reading from the N-terminus, the 310-residue chain is L-lactate dehydrogenase (310 aa).

NAD(+) contacts are provided by residues 10-11, aspartate 32, tyrosine 62, and 76-77; these read MV and GV. Substrate-binding positions include glutamine 79, arginine 85, and 117–120; that span reads NPVD. NAD(+) is bound by residues 115–117 and serine 140; that span reads ATN. 145–148 provides a ligand contact to substrate; that stretch reads DTAR. Beta-D-fructose 1,6-bisphosphate is bound by residues arginine 150 and 162 to 167; that span reads QSVHAY. Histidine 172 functions as the Proton acceptor in the catalytic mechanism. Tyrosine 218 carries the phosphotyrosine modification. Threonine 227 lines the substrate pocket.

Belongs to the LDH/MDH superfamily. LDH family. As to quaternary structure, homotetramer.

The protein localises to the cytoplasm. It catalyses the reaction (S)-lactate + NAD(+) = pyruvate + NADH + H(+). It functions in the pathway fermentation; pyruvate fermentation to lactate; (S)-lactate from pyruvate: step 1/1. With respect to regulation, allosterically activated by fructose 1,6-bisphosphate (FBP). It binds two fructose 1,6-bisphosphate (FBP) molecules per tetramer. Catalyzes the conversion of lactate to pyruvate. The sequence is that of L-lactate dehydrogenase from Thermus caldophilus.